The primary structure comprises 183 residues: uncharacterized protein (183 aa).

The Macro domain occupies 1-182; it reads MFRVVHGDIT…VALKVLERDE (182 aa).

This is an uncharacterized protein from Pyrococcus abyssi (strain GE5 / Orsay).